We begin with the raw amino-acid sequence, 438 residues long: UPF0229 protein NGR_c12350 (438 aa).

Residues 1–16 are compositionally biased toward basic and acidic residues; that stretch reads MPNFIDRRLNPKDKSL. 2 disordered regions span residues 1 to 20 and 83 to 107; these read MPNF…GNRQ and FAAG…GTGQ. Residues 94–105 are compositionally biased toward gly residues; the sequence is SGGGATGAGAGT.

It belongs to the UPF0229 family.

The protein is UPF0229 protein NGR_c12350 of Sinorhizobium fredii (strain NBRC 101917 / NGR234).